The primary structure comprises 655 residues: MKGVKKEGWISYKVDGLFSFLWQKRYLVLNDSYLAFYKSDKCNEEPVLSVPLTSITNVSRIQLKQNCFEILRATDQKENISPINSYFYESNSKRSIFISTRTERDLHGWLDAIFAKCPLLSGVSSPTNFTHKVHVGFDPKVGNFVGVPDSWAKLLQTSEITYDDWNRNSKAVIKALQFYEDYNGLDTMQFNDHLNTSLDLKPLKSPTRYIINKRTNSIKRSVSRTLRKGKTDSILPVYQSELKPFPRPSDDDYKFTNIEDNKVREEGRVHVSKESTADSQTKQLGKKEQKVIQSHLRRHDNNSTFRPHRLAPSAPATKNHDSKTKWHKEDLLELKNNDDSNEIIMKMKTVAIDVNPRPYFQLVEKAGQGASGAVYLSKRIKLPQENDPRFLKSHCHRVVGERVAIKQIRLSEQPKKQLIMNELLVMNDSRQENIVNFLEAYIIDDEELWVIMEYMEGGCLTDILDAVARSNTGEHSSPLNENQMAYIVKETCQGLKFLHNKKIIHRDIKSDNILLNSQGLVKITDFGFCVELTEKRSKRATMVGTPYWMAPEIVNQKGYDEKVDVWSLGIMLIEMIEGEPPYLNEDPLKALYLIANNGSPKLRHPESVSKQTKQFLDACLQVNVESRASVRKLLTFEFLSMACSPEQLKVSLKWH.

One can recognise a PH domain in the interval G3–P118. Residues V123–G136 enclose the CRIB domain. 2 stretches are compositionally biased toward basic and acidic residues: residues E265–T276 and K318–H327. The segment at E265 to H327 is disordered. Positions F360 to L639 constitute a Protein kinase domain. Residues A366 to V374 and K406 each bind ATP. Catalysis depends on D507, which acts as the Proton acceptor.

It belongs to the protein kinase superfamily. STE Ser/Thr protein kinase family. STE20 subfamily.

The enzyme catalyses L-seryl-[protein] + ATP = O-phospho-L-seryl-[protein] + ADP + H(+). The catalysed reaction is L-threonyl-[protein] + ATP = O-phospho-L-threonyl-[protein] + ADP + H(+). May be involved in cellular signaling or cytoskeletal functions. May play a role in morphogenetic control. The sequence is that of Serine/threonine-protein kinase SKM1 (SKM1) from Saccharomyces cerevisiae (strain ATCC 204508 / S288c) (Baker's yeast).